Reading from the N-terminus, the 272-residue chain is Ribosomal RNA small subunit methyltransferase A (272 aa).

S-adenosyl-L-methionine is bound by residues Asn-18, Leu-20, Gly-45, Glu-66, Asp-91, and Asn-113.

Belongs to the class I-like SAM-binding methyltransferase superfamily. rRNA adenine N(6)-methyltransferase family. RsmA subfamily.

It is found in the cytoplasm. It catalyses the reaction adenosine(1518)/adenosine(1519) in 16S rRNA + 4 S-adenosyl-L-methionine = N(6)-dimethyladenosine(1518)/N(6)-dimethyladenosine(1519) in 16S rRNA + 4 S-adenosyl-L-homocysteine + 4 H(+). Specifically dimethylates two adjacent adenosines (A1518 and A1519) in the loop of a conserved hairpin near the 3'-end of 16S rRNA in the 30S particle. May play a critical role in biogenesis of 30S subunits. This chain is Ribosomal RNA small subunit methyltransferase A, found in Serratia proteamaculans (strain 568).